Here is a 359-residue protein sequence, read N- to C-terminus: MKKIIHVDMDCFFAAVEMRDFPELRGKPIAVGGRSDRRGVISTCNYEARKFGVRSAMASAYALKLCPDLILVPGRMSVYKEVSAQIREVFARYTELIEPLSLDEAYLDVSDCTQHQGSATLIAEAIRREIFEVTGLTASAGIAPVKFLAKIASDLNKPNGQYVITPQMIPEFVKTLALIKIPGVGKVTAAKLETMGLITCADVQACSRQSLMERFGKFGGVLYDRAQGIDPRGISPHRERKSVGVETTLAKDIYTYEQCQAVMPQLIQELSGRISRSAKSRRIHKQVVKLKFDDFKQTTIEQRSDEVSVKLFYDLLKQALERRAGRGIRLLGVSVGLESEAVGAGLDEEVHGAQMDLGF.

Residues 4-185 (IIHVDMDCFF…LALIKIPGVG (182 aa)) form the UmuC domain. Mg(2+) contacts are provided by aspartate 8 and aspartate 103. Residue glutamate 104 is part of the active site.

Belongs to the DNA polymerase type-Y family. In terms of assembly, monomer. It depends on Mg(2+) as a cofactor.

It localises to the cytoplasm. The enzyme catalyses DNA(n) + a 2'-deoxyribonucleoside 5'-triphosphate = DNA(n+1) + diphosphate. Its function is as follows. Poorly processive, error-prone DNA polymerase involved in untargeted mutagenesis. Copies undamaged DNA at stalled replication forks, which arise in vivo from mismatched or misaligned primer ends. These misaligned primers can be extended by PolIV. Exhibits no 3'-5' exonuclease (proofreading) activity. May be involved in translesional synthesis, in conjunction with the beta clamp from PolIII. In Shewanella loihica (strain ATCC BAA-1088 / PV-4), this protein is DNA polymerase IV.